A 207-amino-acid chain; its full sequence is Small ribosomal subunit protein uS4 (207 aa).

The segment at K31 to Q55 is disordered. Over residues G42–G53 the composition is skewed to polar residues. The 61-residue stretch at S97 to L157 folds into the S4 RNA-binding domain.

It belongs to the universal ribosomal protein uS4 family. In terms of assembly, part of the 30S ribosomal subunit. Contacts protein S5. The interaction surface between S4 and S5 is involved in control of translational fidelity.

One of the primary rRNA binding proteins, it binds directly to 16S rRNA where it nucleates assembly of the body of the 30S subunit. Its function is as follows. With S5 and S12 plays an important role in translational accuracy. This is Small ribosomal subunit protein uS4 from Paraburkholderia xenovorans (strain LB400).